Reading from the N-terminus, the 492-residue chain is Proline--tRNA ligase (492 aa).

This sequence belongs to the class-II aminoacyl-tRNA synthetase family. ProS type 3 subfamily. As to quaternary structure, homodimer.

It is found in the cytoplasm. It carries out the reaction tRNA(Pro) + L-proline + ATP = L-prolyl-tRNA(Pro) + AMP + diphosphate. In terms of biological role, catalyzes the attachment of proline to tRNA(Pro) in a two-step reaction: proline is first activated by ATP to form Pro-AMP and then transferred to the acceptor end of tRNA(Pro). The protein is Proline--tRNA ligase of Christiangramia forsetii (strain DSM 17595 / CGMCC 1.15422 / KT0803) (Gramella forsetii).